A 359-amino-acid polypeptide reads, in one-letter code: 3-dehydroquinate synthase (359 aa).

NAD(+)-binding positions include 71-76 (DGEQFK), 105-109 (GVIGD), 129-130 (TT), Lys-142, Lys-151, and 169-172 (CLHT). Positions 184, 247, and 264 each coordinate Zn(2+).

The protein belongs to the sugar phosphate cyclases superfamily. Dehydroquinate synthase family. The cofactor is Co(2+). Zn(2+) serves as cofactor. It depends on NAD(+) as a cofactor.

It localises to the cytoplasm. It catalyses the reaction 7-phospho-2-dehydro-3-deoxy-D-arabino-heptonate = 3-dehydroquinate + phosphate. The protein operates within metabolic intermediate biosynthesis; chorismate biosynthesis; chorismate from D-erythrose 4-phosphate and phosphoenolpyruvate: step 2/7. Functionally, catalyzes the conversion of 3-deoxy-D-arabino-heptulosonate 7-phosphate (DAHP) to dehydroquinate (DHQ). The protein is 3-dehydroquinate synthase of Shewanella sp. (strain W3-18-1).